A 316-amino-acid polypeptide reads, in one-letter code: Phosphatidylinositol mannoside acyltransferase (316 aa).

The Proton acceptor role is filled by histidine 137. Residues histidine 137 and arginine 175 each contribute to the hexadecanoyl-CoA site. Glutamate 211 is a catalytic residue. Residue glutamate 240 participates in hexadecanoyl-CoA binding.

It belongs to the LpxL/LpxM/LpxP family.

It localises to the cell inner membrane. It carries out the reaction a 2,6-O-bis(alpha-D-mannopyranosyl)-1-phosphatidyl-1D-myo-inositol + an acyl-CoA = a 2-O-(alpha-D-mannosyl)-6-O-(6-O-acyl-alpha-D-mannosyl)-1-phosphatidyl-1D-myo-inositol + CoA. The catalysed reaction is a 1,2-diacyl-sn-glycero-3-phospho-[alpha-D-mannopyranosyl-(1&lt;-&gt;6)-D-myo-inositol] + an acyl-CoA = a 1,2-diacyl-sn-glycero-3-phospho-[alpha-D-6-acyl-mannopyranosyl-(1&lt;-&gt;6)-D-myo-inositol] + CoA. The protein operates within phospholipid metabolism; phosphatidylinositol metabolism. Its function is as follows. Catalyzes the transfer of a palmitoyl moiety from palmitoyl-CoA to the 6-position of the mannose ring linked to the 2-position of myo-inositol in phosphatidyl-myo-inositol monomannoside (PIM1) or dimannoside (PIM2). Essential for growth and survival in axenic cultures and during macrophage infection and in a mouse model of infection. The chain is Phosphatidylinositol mannoside acyltransferase from Mycobacterium tuberculosis (strain ATCC 25618 / H37Rv).